A 299-amino-acid chain; its full sequence is Putative ammonium transporter 4 member 1 (299 aa).

5 consecutive transmembrane segments (helical) span residues 16-36, 59-79, 104-124, 158-178, and 218-238; these read AWPL…LVIL, VLLT…GFNG, LLVW…ISAV, VLHT…LLLL, and AGIA…CLAV.

This sequence belongs to the ammonia transporter channel (TC 1.A.11.2) family.

It is found in the membrane. The protein is Putative ammonium transporter 4 member 1 (AMT4-1) of Oryza sativa subsp. japonica (Rice).